A 336-amino-acid polypeptide reads, in one-letter code: Potassium channel subfamily K member 1 (336 aa).

The Cytoplasmic portion of the chain corresponds to 1-20; sequence MLQSLAGSSCVRLVERHRSA. A helical membrane pass occupies residues 21–41; sequence WCFGLLVLGYLLYLVFGAVVF. Residues 42 to 103 lie on the Extracellular side of the membrane; the sequence is SSVELPYEDL…SNASGNWNWD (62 aa). Asparagine 95 carries N-linked (GlcNAc...) asparagine glycosylation. Positions 104-116 form an intramembrane region, helical; sequence FTSALFFASTVLS. Residues 117-122 lie within the membrane without spanning it; the sequence is TTGYGH. Positions 117-122 are selectivity filter 1; it reads TTGYGH. Topologically, residues 123 to 132 are extracellular; sequence TVPLSDGGKA. Residues 133–156 traverse the membrane as a helical segment; that stretch reads FCIIYSVIGIPFTLLFLTAVVQRI. Over 157–181 the chain is Cytoplasmic; that stretch reads TVHVTRRPVLYFHIRWGFSKQMVGI. A helical membrane pass occupies residues 182–202; sequence VHAVVLGFVTVSCFFFIPAAV. At 203–211 the chain is on the extracellular side; the sequence is FSVLEDDWN. The helical intramembrane region spans 212 to 224; the sequence is FLESFYFCFISLS. The tract at residues 225-230 is selectivity filter 2; it reads TIGLGD. The stretch at 225 to 231 is an intramembrane region; that stretch reads TIGLGDY. At 232-243 the chain is on the extracellular side; the sequence is VPGEGYNQKFRE. A helical transmembrane segment spans residues 244-267; the sequence is LYKIGITCYLLLGLIAMLVVLETF. The Cytoplasmic segment spans residues 268–336; that stretch reads CELHELKKFR…SAYAEDSASH (69 aa). A Glycyl lysine isopeptide (Lys-Gly) (interchain with G-Cter in SUMO) cross-link involves residue lysine 274. The segment at 293 to 299 is important for intracellular retention in recycling endosomes; the sequence is IVEHDQL.

Belongs to the two pore domain potassium channel (TC 1.A.1.8) family. Homodimer; disulfide-linked. Heterodimer with KCNK2; disulfide-linked. In astrocytes, forms mostly heterodimeric potassium channels with KCNK2, with only a minor proportion of functional channels containing homodimeric KCNK1. Interacts with KCNK3 and KCNK9, forming functional heterodimeric channels. Interacts with GNG4. Identified in a complex with PSD and ARF6; interacts only with PSD that is bound to ARF6. Interacts with UBE2I. Post-translationally, sumoylation is controversial. Sumoylated by UBE2I. Not sumoylated when expressed in xenopus oocytes or mammalian cells. Sumoylation inactivates the channel, but does not interfere with expression at the cell membrane. Sumoylation of a single subunit is sufficient to silence the dimeric channel. Sumoylation of KCNK1 is sufficient to silence heterodimeric channels formed by KCNK1 and KCNK3 or KCNK9. Desumoylated by SENP1; this activates the channel. Desumoylated by SENP1; this strongly increases halothane-mediated activation of heterodimeric channels formed with KCNK9. SENP1 treatment has no effect.

The protein resides in the cell membrane. Its subcellular location is the recycling endosome. It localises to the synaptic cell membrane. It is found in the cytoplasmic vesicle. The protein localises to the perikaryon. The protein resides in the cell projection. Its subcellular location is the dendrite. It localises to the apical cell membrane. It carries out the reaction K(+)(in) = K(+)(out). The catalysed reaction is NH4(+)(in) = NH4(+)(out). The enzyme catalyses Na(+)(in) = Na(+)(out). It catalyses the reaction Rb(+)(in) = Rb(+)(out). It carries out the reaction Cs(+)(in) = Cs(+)(out). The catalysed reaction is Li(+)(in) = Li(+)(out). The enzyme catalyses L-glutamate(out) = L-glutamate(in). It catalyses the reaction chloride(in) = chloride(out). Functionally, ion channel that contributes to passive transmembrane potassium transport and to the regulation of the resting membrane potential in brain astrocytes, but also in kidney and in other tissues. Forms dimeric channels through which potassium ions pass in accordance with their electrochemical gradient. The channel is selective for K(+) ions at physiological potassium concentrations and at neutral pH, but becomes permeable to Na(+) at subphysiological K(+) levels and upon acidification of the extracellular medium. The homodimer has very low potassium channel activity, when expressed in heterologous systems, and can function as weakly inward rectifying potassium channel. Channel activity is modulated by activation of serotonin receptors. Heterodimeric channels containing KCNK1 and KCNK2 have much higher activity, and may represent the predominant form in astrocytes. Heterodimeric channels containing KCNK1 and KCNK3 or KCNK9 have much higher activity. Heterodimeric channels formed by KCNK1 and KCNK9 may contribute to halothane-sensitive currents. Mediates outward rectifying potassium currents in dentate gyrus granule cells and contributes to the regulation of their resting membrane potential. Contributes to the regulation of action potential firing in dentate gyrus granule cells and down-regulates their intrinsic excitability. In astrocytes, the heterodimer formed by KCNK1 and KCNK2 is required for rapid glutamate release in response to activation of G-protein coupled receptors, such as F2R and CNR1. Required for normal ion and water transport in the kidney. Contributes to the regulation of the resting membrane potential of pancreatic beta cells. The low channel activity of homodimeric KCNK1 may be due to sumoylation. The low channel activity may be due to rapid internalization from the cell membrane and retention in recycling endosomes. Permeable to monovalent cations with ion selectivity for K(+) &gt; Rb(+) &gt;&gt; NH4(+) &gt;&gt; Cs(+) = Na(+) = Li(+). The chain is Potassium channel subfamily K member 1 from Cavia porcellus (Guinea pig).